The sequence spans 442 residues: UDP-N-acetylmuramate--L-alanine ligase (442 aa).

An ATP-binding site is contributed by 109–115 (GAHGKTS).

The protein belongs to the MurCDEF family.

Its subcellular location is the cytoplasm. The enzyme catalyses UDP-N-acetyl-alpha-D-muramate + L-alanine + ATP = UDP-N-acetyl-alpha-D-muramoyl-L-alanine + ADP + phosphate + H(+). Its pathway is cell wall biogenesis; peptidoglycan biosynthesis. Cell wall formation. The chain is UDP-N-acetylmuramate--L-alanine ligase from Streptococcus pyogenes serotype M3 (strain SSI-1).